A 968-amino-acid polypeptide reads, in one-letter code: RNA polymerase-associated protein RapA (968 aa).

The Helicase ATP-binding domain maps to 164-334 (DVGRRHAPRV…FARLRLLDPN (171 aa)). 177–184 (DEVGLGKT) provides a ligand contact to ATP. The DEAH box motif lies at 280-283 (DEAH). One can recognise a Helicase C-terminal domain in the interval 490 to 662 (RVEWLMGYLT…YLASPDQTEG (173 aa)).

Belongs to the SNF2/RAD54 helicase family. RapA subfamily. As to quaternary structure, interacts with the RNAP. Has a higher affinity for the core RNAP than for the holoenzyme. Its ATPase activity is stimulated by binding to RNAP.

Functionally, transcription regulator that activates transcription by stimulating RNA polymerase (RNAP) recycling in case of stress conditions such as supercoiled DNA or high salt concentrations. Probably acts by releasing the RNAP, when it is trapped or immobilized on tightly supercoiled DNA. Does not activate transcription on linear DNA. Probably not involved in DNA repair. This Escherichia fergusonii (strain ATCC 35469 / DSM 13698 / CCUG 18766 / IAM 14443 / JCM 21226 / LMG 7866 / NBRC 102419 / NCTC 12128 / CDC 0568-73) protein is RNA polymerase-associated protein RapA.